The following is a 635-amino-acid chain: Glutamyl-tRNA(Gln) amidotransferase subunit E (635 aa).

A disordered region spans residues 415 to 437 (LPDGNTEYMRPLPGKARMYPETD).

Belongs to the GatB/GatE family. GatE subfamily. Heterodimer of GatD and GatE.

It catalyses the reaction L-glutamyl-tRNA(Gln) + L-glutamine + ATP + H2O = L-glutaminyl-tRNA(Gln) + L-glutamate + ADP + phosphate + H(+). Allows the formation of correctly charged Gln-tRNA(Gln) through the transamidation of misacylated Glu-tRNA(Gln) in organisms which lack glutaminyl-tRNA synthetase. The reaction takes place in the presence of glutamine and ATP through an activated gamma-phospho-Glu-tRNA(Gln). The GatDE system is specific for glutamate and does not act on aspartate. The sequence is that of Glutamyl-tRNA(Gln) amidotransferase subunit E from Pyrococcus horikoshii (strain ATCC 700860 / DSM 12428 / JCM 9974 / NBRC 100139 / OT-3).